Here is a 138-residue protein sequence, read N- to C-terminus: UPF0310 protein MAV_1800 (138 aa).

Belongs to the UPF0310 family.

This Mycobacterium avium (strain 104) protein is UPF0310 protein MAV_1800.